The chain runs to 267 residues: uncharacterized protein (267 aa).

The interval 72–267 (LTENNNNNNT…EEKKKKKKKK (196 aa)) is disordered. Residues 122–145 (DSVSSSTTTTIITNNKKINNNNNN) show a composition bias toward low complexity. A compositionally biased stretch (basic and acidic residues) spans 159-175 (ENEKSVQKSKKEKESPK). The segment covering 194–218 (SESSSSSSSSSSSESSSSESESSSS) has biased composition (low complexity).

This is an uncharacterized protein from Dictyostelium discoideum (Social amoeba).